Consider the following 618-residue polypeptide: MGKIVGIDLGTTNSVVAVMEGGKPTVITNAEGFRTTPSVVAYTKTGDRLVGQIAKRQAVLNPGNTFYSVKRFIGRKFDEVTEEAKQVPYKVTGTQNVRIECPALQTSFTPEEISAQVLRKLAEDASKYIGEPVTQAVITVPAYFNDSQRQATKDAGKIAGLEVLRIINEPTAASLAYGLDKKKNETILVFDLGGGTFDVSILEVGDGVFEVLSTSGDTHLGGDDFDKKLVDFFIEEFQKLENINLREDQQALQRLTEAAEKAKIELSSVTQTEITLPFLSLTPSGPKHFDTTLNRAKFEELCSTLIDRCRIPVETALKDAKLTKEDIDEVVLVGGSTRIPAVRELVQKVLDKVPKQSVNPDEVVAVGAAVQAGVLAGEVKDIVLLDVTPLSLGVETLGGVMSKIIVRNTTIPTQKSELFSTATDGQTNVEIHVLQGERGFAKDNKSLGTFRLDGIAPAPRGVPQIEVTFDIDANGILSVTAKDKGTGKEKSITITGASTLSQDEVERMVQEAEKNAAQDKENRQKIELRNQAESLINQAERQLKEFKLEPNVQAPIEQTIQQLQTALKEDNLEQVQSLCQELQNSLLEIGKQVYSKTETTTPNKNEEDVIDASFSEEK.

Positions 595 to 618 are disordered; it reads SKTETTTPNKNEEDVIDASFSEEK.

The protein belongs to the heat shock protein 70 family.

It localises to the plastid. The protein localises to the cyanelle. Its function is as follows. Acts as a chaperone. This Cyanophora paradoxa protein is Chaperone protein dnaK (dnaK-A).